The chain runs to 188 residues: MKIGVLGVQGDVREHVEALHKLGVETLIVKLPEQLDMVDGLILPGGESTTMIRILKEMDMDEKLVERINEGLPVFATCAGVILLAKRIENYSQEKLGVLDITVERNAYGRQVESFETFVEIPAVGKDPFRAIFIRAPKIVETGKNVEILATYDYDPVLVKEGNILACTFHPELTDDLRLHRYFLEMVK.

46 to 48 (GES) serves as a coordination point for L-glutamine. Residue C78 is the Nucleophile of the active site. Residues R105 and 134 to 135 (IR) contribute to the L-glutamine site. Active-site charge relay system residues include H170 and E172.

This sequence belongs to the glutaminase PdxT/SNO family. In terms of assembly, in the presence of PdxS, forms a dodecamer of heterodimers. Only shows activity in the heterodimer.

It catalyses the reaction aldehydo-D-ribose 5-phosphate + D-glyceraldehyde 3-phosphate + L-glutamine = pyridoxal 5'-phosphate + L-glutamate + phosphate + 3 H2O + H(+). The catalysed reaction is L-glutamine + H2O = L-glutamate + NH4(+). It participates in cofactor biosynthesis; pyridoxal 5'-phosphate biosynthesis. Its function is as follows. Catalyzes the hydrolysis of glutamine to glutamate and ammonia as part of the biosynthesis of pyridoxal 5'-phosphate. The resulting ammonia molecule is channeled to the active site of PdxS. The protein is Pyridoxal 5'-phosphate synthase subunit PdxT of Thermotoga petrophila (strain ATCC BAA-488 / DSM 13995 / JCM 10881 / RKU-1).